Here is a 412-residue protein sequence, read N- to C-terminus: Argininosuccinate synthase (412 aa).

Residues 10–18 (AYSGGLDTS) and alanine 36 contribute to the ATP site. L-citrulline-binding residues include tyrosine 87 and serine 92. A Phosphotyrosine modification is found at tyrosine 87. Lysine 112 carries the N6-acetyllysine modification. Tyrosine 113 is modified (phosphotyrosine). An ATP-binding site is contributed by 115–123 (SHGATGKGN). Residues threonine 119, asparagine 123, and aspartate 124 each contribute to the L-aspartate site. Residue asparagine 123 coordinates L-citrulline. An L-citrulline-binding site is contributed by arginine 127. Residues lysine 165 and lysine 176 each carry the N6-acetyllysine; by CLOCK modification. Phosphoserine is present on residues serine 177 and serine 180. Serine 180 and serine 189 together coordinate L-citrulline. Threonine 219 is subject to Phosphothreonine. Glutamate 270 and tyrosine 282 together coordinate L-citrulline.

The protein belongs to the argininosuccinate synthase family. Type 1 subfamily. In terms of assembly, homotetramer. Interacts with NMRAL1. Interacts with CLOCK; in a circadian manner. Forms tissue-specific complexes with ASL, SLC7A1, HSP90AA1 and nitric oxide synthase NOS1, NOS2 or NOS3; the complex regulates cell-autonomous L-arginine synthesis and citrulline recycling while channeling extracellular L-arginine to nitric oxide synthesis pathway. Acetylated by CLOCK in a circadian manner which negatively regulates its enzyme activity. Deacetylated by histone deacetylases.

The protein localises to the cytoplasm. It localises to the cytosol. It catalyses the reaction L-citrulline + L-aspartate + ATP = 2-(N(omega)-L-arginino)succinate + AMP + diphosphate + H(+). It participates in amino-acid biosynthesis; L-arginine biosynthesis; L-arginine from L-ornithine and carbamoyl phosphate: step 2/3. Its pathway is nitrogen metabolism; urea cycle; (N(omega)-L-arginino)succinate from L-aspartate and L-citrulline: step 1/1. Its function is as follows. One of the enzymes of the urea cycle, the metabolic pathway transforming neurotoxic amonia produced by protein catabolism into inocuous urea in the liver of ureotelic animals. Catalyzes the formation of arginosuccinate from aspartate, citrulline and ATP and together with ASL it is responsible for the biosynthesis of arginine in most body tissues. Indirectly, may be involved in the control of blood pressure. The protein is Argininosuccinate synthase of Rattus norvegicus (Rat).